A 274-amino-acid chain; its full sequence is 2,3,4,5-tetrahydropyridine-2,6-dicarboxylate N-succinyltransferase (274 aa).

Residues arginine 104 and aspartate 141 each coordinate substrate.

This sequence belongs to the transferase hexapeptide repeat family. Homotrimer.

Its subcellular location is the cytoplasm. It carries out the reaction (S)-2,3,4,5-tetrahydrodipicolinate + succinyl-CoA + H2O = (S)-2-succinylamino-6-oxoheptanedioate + CoA. The protein operates within amino-acid biosynthesis; L-lysine biosynthesis via DAP pathway; LL-2,6-diaminopimelate from (S)-tetrahydrodipicolinate (succinylase route): step 1/3. The polypeptide is 2,3,4,5-tetrahydropyridine-2,6-dicarboxylate N-succinyltransferase (Shewanella baltica (strain OS155 / ATCC BAA-1091)).